Here is a 269-residue protein sequence, read N- to C-terminus: Type III pantothenate kinase (269 aa).

An ATP-binding site is contributed by 9 to 16 (DVGNTSVK). Substrate-binding positions include Tyr106 and 113 to 116 (GADR). Asp115 (proton acceptor) is an active-site residue. Asp137 contacts K(+). An ATP-binding site is contributed by Thr140. Residue Thr193 participates in substrate binding.

It belongs to the type III pantothenate kinase family. In terms of assembly, homodimer. NH4(+) is required as a cofactor. It depends on K(+) as a cofactor.

Its subcellular location is the cytoplasm. It carries out the reaction (R)-pantothenate + ATP = (R)-4'-phosphopantothenate + ADP + H(+). Its pathway is cofactor biosynthesis; coenzyme A biosynthesis; CoA from (R)-pantothenate: step 1/5. Its function is as follows. Catalyzes the phosphorylation of pantothenate (Pan), the first step in CoA biosynthesis. This Lawsonia intracellularis (strain PHE/MN1-00) protein is Type III pantothenate kinase.